A 218-amino-acid chain; its full sequence is MVKMTLIARVTDGLPLAEGLDDGRDLPDSDMYKQQVKALFKNLSRGQNDASRMSVETGPYVFHYIIEGRVCYLTMCDRSYPKKLAFQYLEDLKNEFERVNGPNIETAARPYAFIKFDTFIQKTKKLYQDTRTQRNIAKLNDELYEVHQIMTRNVQEVLGVGEKLDQVSEMSSRLTSESRIYADKAKDLNRQALIRKWAPVAIVFGVVFLLFWVKNKLW.

The Cytoplasmic portion of the chain corresponds to 1 to 192; sequence MVKMTLIARV…DKAKDLNRQA (192 aa). Residues 6–120 form the Longin domain; that stretch reads LIARVTDGLP…YAFIKFDTFI (115 aa). A v-SNARE coiled-coil homology domain is found at 135 to 195; that stretch reads NIAKLNDELY…KDLNRQALIR (61 aa). Residues 193–213 form a helical; Anchor for type IV membrane protein membrane-spanning segment; sequence LIRKWAPVAIVFGVVFLLFWV. The Vesicular segment spans residues 214 to 218; that stretch reads KNKLW.

This sequence belongs to the synaptobrevin family. As to quaternary structure, interacts with SEC24A. As to expression, mainly expressed in flowers and siliques, to a lower extent in seedlings, and barely in roots and leaves.

It is found in the golgi apparatus membrane. It localises to the endoplasmic reticulum membrane. In terms of biological role, V-SNARE involved in vesicle trafficking from the ER to the Golgi complex and required for early secretion. Involved in endoplasmic reticulum (ER) biogenesis and functions as well as for Golgi-stack integrity. Essential for gametophytes development. Involved in cesium Cs(+) accumulation, a non-essential cation. The polypeptide is 25.3 kDa vesicle transport protein SEC22-1 (Arabidopsis thaliana (Mouse-ear cress)).